The following is a 241-amino-acid chain: ATP synthase subunit a (241 aa).

The next 5 helical transmembrane spans lie at 30–50 (GQIF…VLVG), 89–109 (LPFI…GALI), 128–148 (INTT…AGLS), 193–213 (LAVG…VMLL), and 214–234 (GLFT…FYIG).

It belongs to the ATPase A chain family. F-type ATPases have 2 components, CF(1) - the catalytic core - and CF(0) - the membrane proton channel. CF(1) has five subunits: alpha(3), beta(3), gamma(1), delta(1), epsilon(1). CF(0) has four main subunits: a, b, b' and c.

Its subcellular location is the cellular thylakoid membrane. Key component of the proton channel; it plays a direct role in the translocation of protons across the membrane. The polypeptide is ATP synthase subunit a (Synechococcus sp. (strain CC9311)).